Here is a 744-residue protein sequence, read N- to C-terminus: Catalase-peroxidase (744 aa).

Residues Trp108–Tyr231 constitute a cross-link (tryptophyl-tyrosyl-methioninium (Trp-Tyr) (with M-257)). The active-site Proton acceptor is His109. A cross-link (tryptophyl-tyrosyl-methioninium (Tyr-Met) (with W-108)) is located at residues Tyr231 to Met257. His272 serves as a coordination point for heme b. A disordered region spans residues Ala353–Asp372.

Belongs to the peroxidase family. Peroxidase/catalase subfamily. As to quaternary structure, homodimer or homotetramer. The cofactor is heme b. Post-translationally, formation of the three residue Trp-Tyr-Met cross-link is important for the catalase, but not the peroxidase activity of the enzyme.

It catalyses the reaction H2O2 + AH2 = A + 2 H2O. The enzyme catalyses 2 H2O2 = O2 + 2 H2O. In terms of biological role, bifunctional enzyme with both catalase and broad-spectrum peroxidase activity. This Frankia casuarinae (strain DSM 45818 / CECT 9043 / HFP020203 / CcI3) protein is Catalase-peroxidase.